An 89-amino-acid chain; its full sequence is UPF0250 protein Bphy_0213 (89 aa).

It belongs to the UPF0250 family.

The protein is UPF0250 protein Bphy_0213 of Paraburkholderia phymatum (strain DSM 17167 / CIP 108236 / LMG 21445 / STM815) (Burkholderia phymatum).